A 146-amino-acid polypeptide reads, in one-letter code: Large ribosomal subunit protein uL15 (146 aa).

Residues 1 to 46 (MAIELHDLKPAPGAHKAKTRVGRGEGSKGKTAGRGTKGTGARKNVP) are disordered. Positions 29 to 43 (GKTAGRGTKGTGARK) are enriched in low complexity.

Belongs to the universal ribosomal protein uL15 family. In terms of assembly, part of the 50S ribosomal subunit.

In terms of biological role, binds to the 23S rRNA. The polypeptide is Large ribosomal subunit protein uL15 (Cutibacterium acnes (strain DSM 16379 / KPA171202) (Propionibacterium acnes)).